Consider the following 420-residue polypeptide: Tyrosine--tRNA ligase (420 aa).

Position 33 (Tyr33) interacts with L-tyrosine. A 'HIGH' region motif is present at residues 38 to 47; it reads PTADSLHIGH. L-tyrosine-binding residues include Tyr168 and Gln172. A 'KMSKS' region motif is present at residues 231–235; sequence KFGKT. Lys234 contacts ATP. Residues 353–419 form the S4 RNA-binding domain; that stretch reads MLLVDALIKV…GKKNYYLVKL (67 aa).

It belongs to the class-I aminoacyl-tRNA synthetase family. TyrS type 1 subfamily. Homodimer.

The protein localises to the cytoplasm. The enzyme catalyses tRNA(Tyr) + L-tyrosine + ATP = L-tyrosyl-tRNA(Tyr) + AMP + diphosphate + H(+). Catalyzes the attachment of tyrosine to tRNA(Tyr) in a two-step reaction: tyrosine is first activated by ATP to form Tyr-AMP and then transferred to the acceptor end of tRNA(Tyr). The protein is Tyrosine--tRNA ligase of Desulfitobacterium hafniense (strain DSM 10664 / DCB-2).